A 197-amino-acid polypeptide reads, in one-letter code: Cold-regulated 413 plasma membrane protein 1 (197 aa).

The Extracellular portion of the chain corresponds to 1-40 (MPMKSLRNDHGTLKAMIGSDFNELTIAAKNLATHAFTLTG). Residues 41-61 (LGFGTSVLEWVASIAAIYLLV) form a helical membrane-spanning segment. The Cytoplasmic segment spans residues 62-71 (LDRTNWKTNM). Residues 72–92 (LTSLLIPYIFFSLPSLIFGIF) form a helical membrane-spanning segment. The Extracellular segment spans residues 93–94 (RG). The helical transmembrane segment at 95–115 (EIGKWIAFVAVVVQLFFPKHA) threads the bilayer. The Cytoplasmic portion of the chain corresponds to 116–117 (RE). The helical transmembrane segment at 118–138 (YLELPVALVLLAVVAPNLIAG) threads the bilayer. Residues 139-141 (TFR) lie on the Extracellular side of the membrane. Residues 142-162 (DSWIGLAICLGIGCYLLQEHI) traverse the membrane as a helical segment. The Cytoplasmic segment spans residues 163-176 (RASGGFRNAFTKAN). Residues 177 to 197 (GISNTVGIICLVVFPVWALIF) traverse the membrane as a helical segment.

It belongs to the Cold-regulated 413 protein family.

Its subcellular location is the membrane. The polypeptide is Cold-regulated 413 plasma membrane protein 1 (COR413PM1) (Arabidopsis thaliana (Mouse-ear cress)).